The following is a 295-amino-acid chain: Pyridoxal 5'-phosphate synthase subunit PdxS (295 aa).

A D-ribose 5-phosphate-binding site is contributed by Asp-25. Lys-82 acts as the Schiff-base intermediate with D-ribose 5-phosphate in catalysis. Residue Gly-154 coordinates D-ribose 5-phosphate. Arg-166 provides a ligand contact to D-glyceraldehyde 3-phosphate. D-ribose 5-phosphate-binding positions include Gly-215 and 236 to 237 (GS).

It belongs to the PdxS/SNZ family. In the presence of PdxT, forms a dodecamer of heterodimers.

It carries out the reaction aldehydo-D-ribose 5-phosphate + D-glyceraldehyde 3-phosphate + L-glutamine = pyridoxal 5'-phosphate + L-glutamate + phosphate + 3 H2O + H(+). The protein operates within cofactor biosynthesis; pyridoxal 5'-phosphate biosynthesis. In terms of biological role, catalyzes the formation of pyridoxal 5'-phosphate from ribose 5-phosphate (RBP), glyceraldehyde 3-phosphate (G3P) and ammonia. The ammonia is provided by the PdxT subunit. Can also use ribulose 5-phosphate and dihydroxyacetone phosphate as substrates, resulting from enzyme-catalyzed isomerization of RBP and G3P, respectively. In Bacillus cereus (strain G9842), this protein is Pyridoxal 5'-phosphate synthase subunit PdxS.